Consider the following 162-residue polypeptide: NADH-quinone oxidoreductase subunit I (162 aa).

4Fe-4S ferredoxin-type domains are found at residues 54–83 (RRYE…IESE) and 93–122 (TRYD…ETQI). [4Fe-4S] cluster is bound by residues cysteine 63, cysteine 66, cysteine 69, cysteine 73, cysteine 102, cysteine 105, cysteine 108, and cysteine 112.

The protein belongs to the complex I 23 kDa subunit family. In terms of assembly, NDH-1 is composed of 14 different subunits. Subunits NuoA, H, J, K, L, M, N constitute the membrane sector of the complex. The cofactor is [4Fe-4S] cluster.

It localises to the cell inner membrane. The enzyme catalyses a quinone + NADH + 5 H(+)(in) = a quinol + NAD(+) + 4 H(+)(out). NDH-1 shuttles electrons from NADH, via FMN and iron-sulfur (Fe-S) centers, to quinones in the respiratory chain. The immediate electron acceptor for the enzyme in this species is believed to be ubiquinone. Couples the redox reaction to proton translocation (for every two electrons transferred, four hydrogen ions are translocated across the cytoplasmic membrane), and thus conserves the redox energy in a proton gradient. This Burkholderia cenocepacia (strain ATCC BAA-245 / DSM 16553 / LMG 16656 / NCTC 13227 / J2315 / CF5610) (Burkholderia cepacia (strain J2315)) protein is NADH-quinone oxidoreductase subunit I.